We begin with the raw amino-acid sequence, 296 residues long: Myozenin-1 (296 aa).

Phosphoserine is present on serine 82. Gly residues-rich tracts occupy residues 105–117 (FSYG…GQAG) and 134–170 (SGFG…QAGG). The disordered stretch occupies residues 105-172 (FSYGKGSSGG…GSGDQAGGDG (68 aa)).

Belongs to the myozenin family. In terms of assembly, interacts with ACTN2, ACTN3, FLNA, FLNB, FLNC, LDB3, PPP3CA and TCAP. Interacts via its C-terminal region with MYOT. In terms of tissue distribution, expressed primarily in skeletal muscle and specifically enriched in the gastrocnemius, which is composed predominantly of fast-twitch muscle fibers. Detected at lower levels in heart.

The protein resides in the nucleus. It localises to the cell projection. The protein localises to the pseudopodium. Functionally, myozenins may serve as intracellular binding proteins involved in linking Z-disk proteins such as alpha-actinin, gamma-filamin, TCAP/telethonin, LDB3/ZASP and localizing calcineurin signaling to the sarcomere. Plays an important role in the modulation of calcineurin signaling. May play a role in myofibrillogenesis. The sequence is that of Myozenin-1 from Mus musculus (Mouse).